The chain runs to 120 residues: MTALLTAVGAAFGALLRYCLNCAAAARGTTGFPWGTWCVNTLGCLLAGALAALPLPAAVAALAGPGLCGGLTTYSTFSYETVRLLAERKWTHALGNIGANLAAGVGAAVLGMAAVGWFLR.

The next 2 membrane-spanning stretches (helical) occupy residues 3 to 23 (ALLTAVGAAFGALLRYCLNCA) and 42 to 62 (LGCLLAGALAALPLPAAVAAL). Na(+) is bound by residues glycine 69 and threonine 72. A helical transmembrane segment spans residues 99 to 119 (ANLAAGVGAAVLGMAAVGWFL).

It belongs to the fluoride channel Fluc/FEX (TC 1.A.43) family.

Its subcellular location is the cell membrane. The catalysed reaction is fluoride(in) = fluoride(out). Its activity is regulated as follows. Na(+) is not transported, but it plays an essential structural role and its presence is essential for fluoride channel function. In terms of biological role, fluoride-specific ion channel. Important for reducing fluoride concentration in the cell, thus reducing its toxicity. The polypeptide is Fluoride-specific ion channel FluC 1 (Thermobifida fusca (strain YX)).